Reading from the N-terminus, the 680-residue chain is Dipeptidyl carboxypeptidase (680 aa).

Residue H469 participates in Zn(2+) binding. E470 is an active-site residue. Zn(2+)-binding residues include H473 and H476.

This sequence belongs to the peptidase M3 family. Zn(2+) serves as cofactor.

The protein resides in the cytoplasm. The catalysed reaction is Hydrolysis of unblocked, C-terminal dipeptides from oligopeptides, with broad specificity. Does not hydrolyze bonds in which P1' is Pro, or both P1 and P1' are Gly.. In terms of biological role, removes dipeptides from the C-termini of N-blocked tripeptides, tetrapeptides and larger peptides. This is Dipeptidyl carboxypeptidase (dcp) from Salmonella typhimurium (strain LT2 / SGSC1412 / ATCC 700720).